We begin with the raw amino-acid sequence, 110 residues long: Large ribosomal subunit protein P1B (110 aa).

The span at 69-85 (PAAGGAGAPAAAAGGEA) shows a compositional bias: low complexity. Positions 69-110 (PAAGGAGAPAAAAGGEAAAEEQKEEAKEEEESDEDMGFGLFD) are disordered. Residues 95-104 (KEEEESDEDM) show a composition bias toward acidic residues.

It belongs to the eukaryotic ribosomal protein P1/P2 family. Component of the large ribosomal subunit (LSU). Mature yeast ribosomes consist of a small (40S) and a large (60S) subunit. The 40S small subunit contains 1 molecule of ribosomal RNA (18S rRNA) and at least 33 different proteins. The large 60S subunit contains 3 rRNA molecules (25S, 5.8S and 5S rRNA) and at least 46 different proteins. The acidic ribosomal P-proteins form the stalk structure of the 60S subunit. They are organized as a pentameric complex in which uL10/P0 interacts with 2 heterodimers of P1 and P2 proteins.

Its subcellular location is the cytoplasm. In terms of biological role, component of the ribosome, a large ribonucleoprotein complex responsible for the synthesis of proteins in the cell. The small ribosomal subunit (SSU) binds messenger RNAs (mRNAs) and translates the encoded message by selecting cognate aminoacyl-transfer RNA (tRNA) molecules. The large subunit (LSU) contains the ribosomal catalytic site termed the peptidyl transferase center (PTC), which catalyzes the formation of peptide bonds, thereby polymerizing the amino acids delivered by tRNAs into a polypeptide chain. The nascent polypeptides leave the ribosome through a tunnel in the LSU and interact with protein factors that function in enzymatic processing, targeting, and the membrane insertion of nascent chains at the exit of the ribosomal tunnel. This Schizosaccharomyces pombe (strain 972 / ATCC 24843) (Fission yeast) protein is Large ribosomal subunit protein P1B (rpp102).